The primary structure comprises 235 residues: Claudin-15 (235 aa).

A topological domain (cytoplasmic) is located at residue methionine 1. Residues leucine 2–leucine 24 form a helical membrane-spanning segment. At alanine 25–tyrosine 74 the chain is on the extracellular side. The cysteines at positions 52 and 62 are disulfide-linked. Residues isoleucine 75–glycine 99 traverse the membrane as a helical segment. Residues leucine 100–lysine 115 are Cytoplasmic-facing. Residue serine 111 is modified to Phosphoserine. A helical transmembrane segment spans residues leucine 116 to phenylalanine 140. Residues asparagine 141–glycine 159 are Extracellular-facing. The interval phenylalanine 146–phenylalanine 147 is important for the formation of tight-junction strand-like structures. The chain crosses the membrane as a helical span at residues proline 160–asparagine 182. The Cytoplasmic segment spans residues cysteine 183 to valine 235. A phosphoserine mark is found at serine 218 and serine 225.

It belongs to the claudin family. Can form homo- and heteropolymeric tight junction strands. Post-translationally, palmitoylated.

The protein localises to the cell junction. The protein resides in the tight junction. Its subcellular location is the cell membrane. It carries out the reaction Na(+)(in) = Na(+)(out). The enzyme catalyses K(+)(in) = K(+)(out). It catalyses the reaction Cs(+)(in) = Cs(+)(out). The catalysed reaction is Rb(+)(in) = Rb(+)(out). It carries out the reaction Li(+)(in) = Li(+)(out). The enzyme catalyses NH4(+)(in) = NH4(+)(out). It catalyses the reaction methylamine(out) = methylamine(in). The catalysed reaction is H2O(in) = H2O(out). Functionally, forms paracellular channels: polymerizes in tight junction strands with cation- and water-selective channels through the strands, conveying epithelial permeability in a process known as paracellular tight junction permeability. In intestinal epithelium, allows for sodium and water fluxes from the peritoneal side to the lumen of the intestine to regulate nutrient absorption and intestinal morphogenesis. In Bos taurus (Bovine), this protein is Claudin-15 (CLDN15).